A 482-amino-acid polypeptide reads, in one-letter code: QWRF motif-containing protein 3 (482 aa).

A compositionally biased stretch (basic and acidic residues) spans 1-20 (MKSCEHELLKTRRGKSREVS). Disordered stretches follow at residues 1–60 (MKSC…GLKK) and 171–220 (TAKP…QWAL). A compositionally biased stretch (low complexity) spans 21-42 (SRFLSSPSASSSPNRRNSTSNS). Polar residues predominate over residues 191-219 (RTNSSKGIENRLQRNNSVSRYGSSMSQWA). Positions 292–295 (QWRF) match the QWRF motif motif.

This sequence belongs to the QWRF family.

This Arabidopsis thaliana (Mouse-ear cress) protein is QWRF motif-containing protein 3 (QWRF3).